The following is a 322-amino-acid chain: Cytochrome c biogenesis protein CcsA (322 aa).

The next 7 membrane-spanning stretches (helical) occupy residues 2–22, 44–64, 68–88, 143–163, 226–246, 260–274, and 289–309; these read LFAT…SIVI, GMIA…LSSG, LSNL…LHTI, MLLS…ILII, VISL…VWAN, TWAF…IYLH, and VASI…LLGI.

It belongs to the CcmF/CycK/Ccl1/NrfE/CcsA family. May interact with Ccs1.

It localises to the plastid. It is found in the chloroplast thylakoid membrane. In terms of biological role, required during biogenesis of c-type cytochromes (cytochrome c6 and cytochrome f) at the step of heme attachment. The chain is Cytochrome c biogenesis protein CcsA from Brachypodium distachyon (Purple false brome).